Here is a 126-residue protein sequence, read N- to C-terminus: Probable 4-amino-4-deoxy-L-arabinose-phosphoundecaprenol flippase subunit ArnF (126 aa).

A helical transmembrane segment spans residues 1–21 (MGFLWALFSVGLVSAAQLLLR). Over 22–47 (SAMVALPPLTDIVAFLQHLLHFQPGT) the chain is Periplasmic. A helical membrane pass occupies residues 48–68 (VGLFFGLLGYLLSMVCWYFAL). Residues 69 to 76 (HRLPLSKA) lie on the Cytoplasmic side of the membrane. The helical transmembrane segment at 77–97 (YALLSLSYILVWAAAIWLPGW) threads the bilayer. Topologically, residues 98–100 (HEP) are periplasmic. The helical transmembrane segment at 101–121 (FYWQSLLGVTIIVAGVLTIFW) threads the bilayer. At 122–126 (PVKRR) the chain is on the cytoplasmic side.

It belongs to the ArnF family. In terms of assembly, heterodimer of ArnE and ArnF.

It localises to the cell inner membrane. It participates in bacterial outer membrane biogenesis; lipopolysaccharide biosynthesis. In terms of biological role, translocates 4-amino-4-deoxy-L-arabinose-phosphoundecaprenol (alpha-L-Ara4N-phosphoundecaprenol) from the cytoplasmic to the periplasmic side of the inner membrane. The protein is Probable 4-amino-4-deoxy-L-arabinose-phosphoundecaprenol flippase subunit ArnF of Klebsiella pneumoniae (strain 342).